Reading from the N-terminus, the 222-residue chain is Interleukin-12 subunit alpha (222 aa).

Residues 1–25 (MCPPRGLLLVTILVLLNHLDHLSLA) form the signal peptide. 3 disulfide bridges follow: cysteine 40-cysteine 113, cysteine 67-cysteine 199, and cysteine 88-cysteine 126. 4 N-linked (GlcNAc...) asparagine glycosylation sites follow: asparagine 42, asparagine 96, asparagine 110, and asparagine 183.

This sequence belongs to the IL-6 superfamily. In terms of assembly, heterodimer with IL12B; disulfide-linked. This heterodimer is known as interleukin IL-12. Heterodimer with EBI3/IL27B; not disulfide-linked. This heterodimer is known as interleukin IL-35. Interacts with NBR1; this interaction promotes IL-12 secretion.

It localises to the secreted. Functionally, heterodimerizes with IL12B to form the IL-12 cytokine or with EBI3/IL27B to form the IL-35 cytokine. IL-12 is primarily produced by professional antigen-presenting cells (APCs) such as B-cells and dendritic cells (DCs) as well as macrophages and granulocytes and regulates T-cell and natural killer-cell responses, induces the production of interferon-gamma (IFN-gamma), favors the differentiation of T-helper 1 (Th1) cells and is an important link between innate resistance and adaptive immunity. Mechanistically, exerts its biological effects through a receptor composed of IL12R1 and IL12R2 subunits. Binding to the receptor results in the rapid tyrosine phosphorylation of a number of cellular substrates including the JAK family kinases TYK2 and JAK2. In turn, recruited STAT4 gets phosphorylated and translocates to the nucleus where it regulates cytokine/growth factor responsive genes. As part of IL-35, plays essential roles in maintaining the immune homeostasis of the liver microenvironment and also functions as an immune-suppressive cytokine. Mediates biological events through unconventional receptors composed of IL12RB2 and gp130/IL6ST heterodimers or homodimers. Signaling requires the transcription factors STAT1 and STAT4, which form a unique heterodimer that binds to distinct DNA sites. The sequence is that of Interleukin-12 subunit alpha (IL12A) from Felis catus (Cat).